Reading from the N-terminus, the 35-residue chain is Endochitinase 2 (35 aa).

Belongs to the glycosyl hydrolase 19 family. Chitinase class I subfamily.

The catalysed reaction is Random endo-hydrolysis of N-acetyl-beta-D-glucosaminide (1-&gt;4)-beta-linkages in chitin and chitodextrins.. Functionally, defense against chitin-containing fungal pathogens. The sequence is that of Endochitinase 2 from Capsicum chinense (Scotch bonnet).